Reading from the N-terminus, the 243-residue chain is Ras-related protein Rab-12 (243 aa).

Residue methionine 1 is modified to N-acetylmethionine. The tract at residues 1–36 is disordered; sequence MDPSAALHRRPAGGGLGAVSPALSGGQARRRKQPPR. 2 positions are modified to phosphoserine: serine 20 and serine 24. Positions 51, 52, 53, 54, 55, 72, and 73 each coordinate GTP. Threonine 55 serves as a coordination point for Mg(2+). 2 consecutive short sequence motifs (switch) follow at residues 64–78 and 96–113; these read DTFC…GVDF and DTAG…YYRS. Threonine 73 and aspartate 96 together coordinate Mg(2+). A GTP-binding site is contributed by glycine 99. Phosphoserine is present on serine 105. Residues asparagine 154, lysine 155, aspartate 157, serine 185, alanine 186, and lysine 187 each coordinate GTP. 2 S-geranylgeranyl cysteine lipidation sites follow: cysteine 242 and cysteine 243.

Belongs to the small GTPase superfamily. Rab family. In terms of assembly, interacts with RABIF and OPTN. Interacts with LRRK2; interaction facilitates phosphorylation of Ser-105. Interacts with GDI1, GDI2 and CHM; these interactions are disrupted by phosphorylation on Ser-105. Interacts with RILPL1 and RILPL2; these interactions are dependent on phosphorylation of Ser-105. It depends on Mg(2+) as a cofactor. In terms of processing, phosphorylation of Ser-105 in the switch II region by LRRK2 prevents the association of RAB regulatory proteins, including CHM and RAB GDP dissociation inhibitors GDI1 and GDI2. In terms of tissue distribution, highest levels in skeletal and cardiac muscle. Also found in comparable amounts in brain, spinal cord and lung. Also detected in testis where it is expressed by Sertoli cells of the seminiferous tubules (at protein level).

It is found in the recycling endosome membrane. The protein localises to the lysosome membrane. Its subcellular location is the golgi apparatus membrane. The protein resides in the cytoplasmic vesicle. It localises to the autophagosome. It carries out the reaction GTP + H2O = GDP + phosphate + H(+). Regulated by guanine nucleotide exchange factors (GEFs) including DENND3 which promote the exchange of bound GDP for free GTP. Regulated by GTPase activating proteins (GAPs) which increase the GTP hydrolysis activity. Inhibited by GDP dissociation inhibitors (GDIs). In terms of biological role, the small GTPases Rab are key regulators of intracellular membrane trafficking, from the formation of transport vesicles to their fusion with membranes. Rabs cycle between an inactive GDP-bound form and an active GTP-bound form that is able to recruit to membranes different sets of downstream effectors directly responsible for vesicle formation, movement, tethering and fusion. RAB12 may play a role in protein transport from recycling endosomes to lysosomes regulating, for instance, the degradation of the transferrin receptor. Involved in autophagy. This chain is Ras-related protein Rab-12, found in Rattus norvegicus (Rat).